The sequence spans 306 residues: MSNEFINFEKISRESWKTLHQKAKALLTQEELKSITSLNDNISINDVIDIYLPLINLIQVYKIAQENLSFSKSLFLKKDIQLRPFIIGISGSVAVGKSTTSRLLQLLLSRTHPNSQVELVTTDGFLYPNQFLIEQGLLNRKGFPESYNMELLLDFLDSIKNGQTAFAPVYSHDIYDIIPNQKQSFNNPDFLIVEGINVFQNQQNNRLYMSDYFDFSIYIDADSSHIETWYIERFLSILKLAKCDPHNYYAQYAQLPRSEAIAFARNVWKTVNLENLEKFIEPTRNRAELILHKSADHKIDEIYLKK.

91–98 (GSVAVGKS) is an ATP binding site.

It belongs to the prokaryotic pantothenate kinase family.

The protein resides in the cytoplasm. It catalyses the reaction (R)-pantothenate + ATP = (R)-4'-phosphopantothenate + ADP + H(+). It participates in cofactor biosynthesis; coenzyme A biosynthesis; CoA from (R)-pantothenate: step 1/5. The polypeptide is Pantothenate kinase (Streptococcus pyogenes serotype M12 (strain MGAS2096)).